Here is a 1137-residue protein sequence, read N- to C-terminus: MTMTANKNSSITHGAGGTKAPRGTLSRSQSVSPPPVLSPPRSPIYPLSDSETSACRYPSHSSSRVLLKDRHPPAPSPQNPQDPSPDTSPPTCPFKTASFGYLDRSPSACKRDAQKESVQGAAQDVAGVAACLPLAQSTPFPGPAAGPRGVLLTRTGTRAHSLGIREKISAWEGRREASPRMSMCGEKREGSGSEWAASEGCPSLGCPSVVPSPCSSEKTFDFKGLRRMSRTFSECSYPETEEEGEALPVRDSFYRLEKRLGRSEPSAFLRGHGSRKESSAVLSRIQKIEQVLKEQPGRGLPQLPSSCYSVDRGKRKTGTLGSLEEPAGGASVSAGSRAVGVAGVAGEAGPPPEREGSGSTKPGTPGNSPSSQRLPSKSSLDPAVNPVPKPKRTFEYEADKNPKSKPSNGLPPSPTPAAPPPLPSTPAPPVTRRPKKDMRGHRKSQSRKSFEFEDASSLQSLYPSSPTENGTENQPKFGSKSTLEENAYEDIVGDLPKENPYEDVDLKSRRAGRKSQQLSENSLDSLHRMWSPQDRKYNSPPTQLSLKPNSQSLRSGNWSERKSHRLPRLPKRHSHDDMLLLAQLSLPSSPSSLNEDSLSTTSELLSSRRARRIPKLVQRINSIYNAKRGKKRLKKLSMSSIETASLRDENSESESDSDDRFKAHTQRLVHIQSMLKRAPSYRTLELELLEWQERELFEYFVVVSLKKKPSRNTYLPEVSYQFPKLDRPTKQMREAEERLKAIPQFCFPDAKDWLPVSEYSSETFSFMLTGEDGSRRFGYCRRLLPSGKGPRLPEVYCVISRLGCFGLFSKVLDEVERRRGISAALVYPFMRSLMESPFPAPGKTIKVKTFLPGAGNEVLELRRPMDSRLEHVDFECLFTCLSVRQLIRIFASLLLERRVIFVADKLSTLSSCSHAVVALLYPFSWQHTFIPVLPASMIDIVCCPTPFLVGLLSSSLPKLKELPVEEALMVNLGSDRFIRQMDDEDTLLPRKLQAALEQALERKNELISQDSDSDSDDECNTLNGLVSEVFIRFFVETVGHYSLFLTQSEKGERAFQREAFRKSVASKSIRRFLEVFMESQMFAGFIQDRELRKCRAKGLFEQRVEQYLEELPDTEQSGMNKFLRGLGNKMKFLHKKN.

Positions 1 to 12 (MTMTANKNSSIT) are enriched in polar residues. A disordered region spans residues 1-99 (MTMTANKNSS…PTCPFKTASF (99 aa)). A phosphoserine mark is found at Ser30 and Ser32. Residues 32–43 (SPPPVLSPPRSP) show a composition bias toward pro residues. A compositionally biased stretch (polar residues) spans 49-64 (DSETSACRYPSHSSSR). Positions 73–92 (PAPSPQNPQDPSPDTSPPTC) are enriched in pro residues. Position 231 is a phosphothreonine (Thr231). Ser233 is modified (phosphoserine). Residues 293 to 573 (KEQPGRGLPQ…HRLPRLPKRH (281 aa)) form a disordered region. Positions 324–348 (EEPAGGASVSAGSRAVGVAGVAGEA) are enriched in low complexity. Thr364 carries the phosphothreonine modification. Phosphoserine is present on Ser368. Residues 368 to 380 (SPSSQRLPSKSSL) show a composition bias toward low complexity. The span at 392-402 (RTFEYEADKNP) shows a compositional bias: basic and acidic residues. Residues 401 to 447 (NPKSKPSNGLPPSPTPAAPPPLPSTPAPPVTRRPKKDMRGHRKSQSR) are interaction with ABL1. Residues 409-431 (GLPPSPTPAAPPPLPSTPAPPVT) show a composition bias toward pro residues. A compositionally biased stretch (basic residues) spans 432–446 (RRPKKDMRGHRKSQS). Polar residues predominate over residues 456–481 (SSLQSLYPSSPTENGTENQPKFGSKS). Position 482 is a phosphothreonine (Thr482). A compositionally biased stretch (basic and acidic residues) spans 495–508 (LPKENPYEDVDLKS). 2 stretches are compositionally biased toward polar residues: residues 514–524 (KSQQLSENSLD) and 539–558 (SPPT…SGNW). Ser545 carries the post-translational modification Phosphoserine. Positions 562–573 (KSHRLPRLPKRH) are enriched in basic residues. Ser574 and Ser622 each carry phosphoserine. Residues 641–661 (IETASLRDENSESESDSDDRF) are disordered. The 149-residue stretch at 698–846 (EYFVVVSLKK…PFPAPGKTIK (149 aa)) folds into the uDENN domain. Positions 868–1001 (RLEHVDFECL…LQAALEQALE (134 aa)) constitute a cDENN domain. The dDENN domain occupies 1003-1096 (KNELISQDSD…QDRELRKCRA (94 aa)).

Interacts with ITSN1 and GRB2. Isoform 1 interacts with the SH3 domain of ABL1. Phosphorylated. Phosphorylation decreases ITSN1 binding. In terms of tissue distribution, widely expressed with the exception of peripheral blood lymphocytes. Isoform 1 is expressed in several epithelial and fibroblast (including tumorigenic) but absent in lymphoid cell lines (at protein level). Isoform 3 is expressed in primary cell or weakly tumorigenic but not in tumorigenic cell lines (at protein level).

It is found in the cytoplasm. The protein resides in the cell cortex. It localises to the cell membrane. Its subcellular location is the recycling endosome. Its function is as follows. May be involved in cytoskeletal organization and tumorogenicity. Seems to be involved in a signaling transduction pathway leading to activation of MAPK1/ERK2. Plays a role in EGFR trafficking from recycling endosomes back to the cell membrane. In terms of biological role, guanine nucleotide exchange factor (GEF) which may activate RAB9A and RAB9B. Promotes the exchange of GDP to GTP, converting inactive GDP-bound Rab proteins into their active GTP-bound form. May block ERK2 activation stimulated by ABL1. May alter cell morphology and cell growth. This chain is DENN domain-containing protein 2B, found in Homo sapiens (Human).